Here is a 648-residue protein sequence, read N- to C-terminus: PTS system N-acetylglucosamine-specific EIICBA component (648 aa).

At Met-1 the chain carries N-formylmethionine. In terms of domain architecture, PTS EIIC type-1 spans 1–371 (MNILGFFQRL…FNLKTPGRED (371 aa)). 12 helical membrane-spanning segments follow: residues 16-36 (LPIA…PDLL), 38-58 (VAFI…IFAI), 70-90 (GAAA…MVTI), 92-112 (PEIN…GAAY), 132-152 (FVPI…GYVW), 159-179 (IHAG…IFGF), 192-212 (VLNT…GTVF), 232-252 (GFFP…YFAA), 260-280 (VGGM…TEPL), 282-302 (FLFM…TGIS), 303-323 (LFVA…GAID), and 339-359 (MLLV…SLVI). A PTS EIIB type-1 domain is found at 390 to 472 (TQLATNYIAA…KKVVARGPVA (83 aa)). Cys-412 (phosphocysteine intermediate; for EIIB activity) is an active-site residue. Cys-412 carries the phosphocysteine; by EIIA modification. The PTS EIIA type-1 domain occupies 517-621 (DEAFASKAVG…SMISPVVCSN (105 aa)). Zn(2+) contacts are provided by His-554 and His-569. The active-site Tele-phosphohistidine intermediate; for EIIA activity is the His-569. His-569 is subject to Phosphohistidine; by HPr.

It depends on Zn(2+) as a cofactor. Post-translationally, 60% of isolated protein was N-formylated.

It localises to the cell inner membrane. It carries out the reaction N(pros)-phospho-L-histidyl-[protein] + N-acetyl-D-glucosamine(out) = N-acetyl-D-glucosamine 6-phosphate(in) + L-histidyl-[protein]. Its activity is regulated as follows. P-chloromercuribenzoate inhibits the accumulation of both N-acetyl-D-glucosamine and antibiotic streptozotocin (2-deoxy-2-(3-methyl-3-nitrosoureido)-D-glucopyranose). N-acetyl-D-glucosamine is a competitive inhibitor for the uptake of streptozotocin. Functionally, the phosphoenolpyruvate-dependent sugar phosphotransferase system (sugar PTS), a major carbohydrate active transport system, catalyzes the phosphorylation of incoming sugar substrates concomitantly with their translocation across the cell membrane. This system is involved in N-acetylglucosamine transport. It can also transport and phosphorylate the antibiotic streptozotocin. Could play a significant role in the recycling of peptidoglycan. The protein is PTS system N-acetylglucosamine-specific EIICBA component of Escherichia coli (strain K12).